The primary structure comprises 212 residues: Peptide methionine sulfoxide reductase MsrA (212 aa).

Residue C52 is part of the active site.

It belongs to the MsrA Met sulfoxide reductase family.

It carries out the reaction L-methionyl-[protein] + [thioredoxin]-disulfide + H2O = L-methionyl-(S)-S-oxide-[protein] + [thioredoxin]-dithiol. The enzyme catalyses [thioredoxin]-disulfide + L-methionine + H2O = L-methionine (S)-S-oxide + [thioredoxin]-dithiol. Has an important function as a repair enzyme for proteins that have been inactivated by oxidation. Catalyzes the reversible oxidation-reduction of methionine sulfoxide in proteins to methionine. In Yersinia enterocolitica serotype O:8 / biotype 1B (strain NCTC 13174 / 8081), this protein is Peptide methionine sulfoxide reductase MsrA.